Consider the following 120-residue polypeptide: Glycine cleavage system H protein (120 aa).

The 83-residue stretch at Val17–Lys99 folds into the Lipoyl-binding domain. An N6-lipoyllysine modification is found at Lys58.

Belongs to the GcvH family. In terms of assembly, the glycine cleavage system is composed of four proteins: P, T, L and H. The cofactor is (R)-lipoate.

Its function is as follows. The glycine cleavage system catalyzes the degradation of glycine. The H protein shuttles the methylamine group of glycine from the P protein to the T protein. This chain is Glycine cleavage system H protein, found in Methylorubrum extorquens (strain PA1) (Methylobacterium extorquens).